Here is a 113-residue protein sequence, read N- to C-terminus: Carboxysome shell protein CcmK1 (113 aa).

In terms of domain architecture, BMC spans Ala-4–Pro-90.

This sequence belongs to the bacterial microcompartments protein family. CcmK subfamily. Homohexamer. Interacts preferentially with CcmK2 and CcmK4a rather than itself in vitro.

It is found in the carboxysome. Its function is as follows. One of the shell proteins of the carboxysome, a polyhedral inclusion where RuBisCO (ribulose bisphosphate carboxylase, rbcL-rbcS) is sequestered. Assembles into hexamers which make sheets that form the facets of the polyhedral carboxysome. The hexamer central pore probably regulates metabolite flux. This Thermosynechococcus vestitus (strain NIES-2133 / IAM M-273 / BP-1) protein is Carboxysome shell protein CcmK1.